The following is a 371-amino-acid chain: Homoserine O-acetyltransferase (371 aa).

Residues 44–350 enclose the AB hydrolase-1 domain; sequence NAILVEHAWT…SYGHDAFLLE (307 aa). Residue serine 150 is the Nucleophile of the active site. A substrate-binding site is contributed by arginine 217. Catalysis depends on residues aspartate 311 and histidine 344. A substrate-binding site is contributed by aspartate 345.

It belongs to the AB hydrolase superfamily. MetX family. Homodimer.

The protein localises to the cytoplasm. The enzyme catalyses L-homoserine + acetyl-CoA = O-acetyl-L-homoserine + CoA. It participates in amino-acid biosynthesis; L-methionine biosynthesis via de novo pathway; O-acetyl-L-homoserine from L-homoserine: step 1/1. Functionally, transfers an acetyl group from acetyl-CoA to L-homoserine, forming acetyl-L-homoserine. The sequence is that of Homoserine O-acetyltransferase from Pelobacter propionicus (strain DSM 2379 / NBRC 103807 / OttBd1).